The sequence spans 488 residues: Zinc metalloproteinase-disintegrin 8 (488 aa).

The N-terminal stretch at methionine 1–serine 20 is a signal peptide. A propeptide spanning residues isoleucine 21–glutamate 191 is cleaved from the precursor. The Peptidase M12B domain occupies threonine 198 to proline 396. Residues glutamate 201 and aspartate 285 each contribute to the Ca(2+) site. Residue asparagine 296 is glycosylated (N-linked (GlcNAc...) asparagine). Cystine bridges form between cysteine 309–cysteine 391, cysteine 349–cysteine 373, and cysteine 351–cysteine 356. Histidine 334 is a Zn(2+) binding site. The active site involves glutamate 335. 2 residues coordinate Zn(2+): histidine 338 and histidine 344. 6 residues coordinate Ca(2+): cysteine 391, asparagine 394, asparagine 409, glutamate 413, glutamate 416, and aspartate 419. The Disintegrin domain occupies proline 404–glycine 488. 7 cysteine pairs are disulfide-bonded: cysteine 407–cysteine 426, cysteine 418–cysteine 436, cysteine 420–cysteine 431, cysteine 430–cysteine 453, cysteine 444–cysteine 450, cysteine 449–cysteine 474, and cysteine 462–cysteine 481. The Cell attachment site signature appears at arginine 466–aspartate 468.

The protein belongs to the venom metalloproteinase (M12B) family. P-II subfamily. Zn(2+) is required as a cofactor. In terms of tissue distribution, expressed by the venom gland.

Its subcellular location is the secreted. Functionally, inhibits ADP-induced platelet aggregation (probably by binding integrin alpha-IIb/beta-3 (ITGA2B/ITGB3)) and degrades fibrinogen. In Crotalus adamanteus (Eastern diamondback rattlesnake), this protein is Zinc metalloproteinase-disintegrin 8.